We begin with the raw amino-acid sequence, 256 residues long: Protein YIPF5 (256 aa).

Residues 1-125 (MSNFDNFNTD…ADGNIMNETD (125 aa)) are Cytoplasmic-facing. Residues 126–146 (LAGPMVFCLAFGATLLLAGKI) traverse the membrane as a helical segment. Residue Q147 is a topological domain, lumenal. Residues 148–168 (FGYVYGISAIGCLGMYCLLNL) form a helical membrane-spanning segment. Residues 169 to 172 (MSMT) lie on the Cytoplasmic side of the membrane. The helical transmembrane segment at 173–193 (GVSFGCVSSVLGYCLLPMIIL) threads the bilayer. The Lumenal segment spans residues 194–195 (SS). A helical transmembrane segment spans residues 196-216 (FAVIFSLQGILGIVLAALIIG). At 217 to 235 (WCSFSASKIFISALAMDGQ) the chain is on the cytoplasmic side. Residues 236–256 (QVLVAYPCALLYGVFALISVF) traverse the membrane as a helical segment.

It belongs to the YIP1 family.

It is found in the endoplasmic reticulum membrane. The protein resides in the golgi apparatus. It localises to the cis-Golgi network membrane. In terms of biological role, plays a role in transport between endoplasmic reticulum and Golgi. The chain is Protein YIPF5 (yipf5) from Xenopus tropicalis (Western clawed frog).